The primary structure comprises 157 residues: Protein Smg (157 aa).

It belongs to the Smg family.

This chain is Protein Smg, found in Klebsiella pneumoniae (strain 342).